The primary structure comprises 356 residues: Carbohydrate sulfotransferase 10 (356 aa).

Residues 1–6 (MHHQWL) are Cytoplasmic-facing. A helical; Signal-anchor for type II membrane protein transmembrane segment spans residues 7-27 (LLAACFWVIFMFMVASKFITL). The Lumenal portion of the chain corresponds to 28–356 (TFKDPDVYSA…GYQKPDFLLN (329 aa)). Asn-99 carries N-linked (GlcNAc...) asparagine glycosylation. 3'-phosphoadenylyl sulfate contacts are provided by residues 127–133 (PKVGNTQ) and 189–197 (RDPFERLIS). N-linked (GlcNAc...) asparagine glycosylation is found at Asn-228 and Asn-316.

It belongs to the sulfotransferase 2 family.

It is found in the golgi apparatus membrane. It carries out the reaction 3-O-{beta-D-GlcA-(1-&gt;[3)-alpha-D-Xyl-(1-&gt;3)-beta-D-GlcA-(1-&gt;](n)-4)-beta-D-Xyl-(1-&gt;4)-Rib-ol-P-Rib-ol-P-3-beta-D-GalNAc-(1-&gt;3)-beta-D-GlcNAc-(1-&gt;4)-O-6-P-alpha-D-Man}-L-Thr-[protein] + 3'-phosphoadenylyl sulfate = 3-O-{O-3-S-beta-D-GlcA-(1-&gt;[3)-alpha-D-Xyl-(1-&gt;3)-beta-D-GlcA-(1-&gt;](n)-4)-beta-D-Xyl-(1-&gt;4)-Rib-ol-P-Rib-ol-P-3-beta-D-GalNAc-(1-&gt;3)-beta-D-GlcNAc-(1-&gt;4)-O-6-P-alpha-D-Man}-L-Thr-[protein] + adenosine 3',5'-bisphosphate + H(+). It catalyses the reaction 17beta-estradiol 3-O-(beta-D-glucuronate) + 3'-phosphoadenylyl sulfate = 17beta-estradiol 3-O-(3-sulfo-beta-D-glucuronate) + adenosine 3',5'-bisphosphate + H(+). The catalysed reaction is 17beta-estradiol 3-O-(beta-D-glucuronate) 17-sulfate + 3'-phosphoadenylyl sulfate = 17beta-estradiol 3-O-(3-sulfo-beta-D-glucuronate) 17-sulfate + adenosine 3',5'-bisphosphate + H(+). The enzyme catalyses 17beta-estradiol 17-O-(beta-D-glucuronate) + 3'-phosphoadenylyl sulfate = 17beta-estradiol 17-O-(3-sulfo-beta-D-glucuronate) + adenosine 3',5'-bisphosphate + H(+). It carries out the reaction 16alpha,17beta-estriol 3-O-(beta-D-glucuronate) + 3'-phosphoadenylyl sulfate = 16alpha,17beta-estriol 3-O-(3-sulfo-beta-D-glucuronate) + adenosine 3',5'-bisphosphate + H(+). It catalyses the reaction 16alpha,17beta-estriol 16-O-(beta-D-glucuronate) + 3'-phosphoadenylyl sulfate = 16alpha,17beta-estriol 16-O-(3-sulfo-beta-D-glucuronate) + adenosine 3',5'-bisphosphate + H(+). The catalysed reaction is 16alpha,17beta-estriol 17-O-(beta-D-glucuronate) + 3'-phosphoadenylyl sulfate = 16alpha,17beta-estriol 17-O-(3-sulfo-beta-D-glucuronate) + adenosine 3',5'-bisphosphate + H(+). The enzyme catalyses estrone 3-O-(beta-D-glucuronate) + 3'-phosphoadenylyl sulfate = estrone 3-O-(3-sulfo-beta-D-glucuronate) + adenosine 3',5'-bisphosphate + H(+). It carries out the reaction 3alpha,20alpha-dihydroxy-5beta-pregnane 3-O-(beta-D-glucuronate) + 3'-phosphoadenylyl sulfate = 3alpha,20alpha-dihydroxy-5beta-pregnane 3-O-(3-sulfo-beta-D-glucuronate) + adenosine 3',5'-bisphosphate + H(+). It catalyses the reaction testosterone 17-O-(beta-D-glucuronate) + 3'-phosphoadenylyl sulfate = testosterone 17-O-(3-sulfo-beta-D-glucuronate) + adenosine 3',5'-bisphosphate + H(+). The catalysed reaction is 3beta-androst-5-en-17-one 3-O-(beta-D-glucuronate) + 3'-phosphoadenylyl sulfate = 3beta-androst-5-en-17-one 3-O-(3-sulfo-beta-D-glucuronate) + adenosine 3',5'-bisphosphate + H(+). The enzyme catalyses 3alpha,17alpha-dihydroxy-5beta-androstane-11-one-17beta-carboxylate 3-O-(beta-D-glucuronate) + 3'-phosphoadenylyl sulfate = 3alpha,17alpha-dihydroxy-5beta-androstane-11-one-17beta-carboxylate 3-O-(3-sulfo-beta-D-glucuronate) + adenosine 3',5'-bisphosphate + H(+). It carries out the reaction 3alpha-hydroxyetiocholan-17-one 3-O-(beta-D-glucuronate) + 3'-phosphoadenylyl sulfate = 3alpha-hydroxyetiocholan-17-one 3-O-(3-sulfo-beta-D-glucuronate) + adenosine 3',5'-bisphosphate + H(+). It participates in steroid metabolism. Its pathway is protein modification; carbohydrate sulfation. Functionally, catalyzes the transfer of sulfate from 3'-phosphoadenylyl sulfate (PAPS) to position 3 of terminal glucuronic acid of both protein- and lipid-linked oligosaccharides. Participates in biosynthesis of HNK-1 carbohydrate structure 3-O-sulfo-beta-D-GlcA-(1-&gt;3)-beta-D-Gal-(1-&gt;4)-D-GlcNAc-R, a sulfated glucuronyl-lactosaminyl residue carried by many neural recognition molecules, which is involved in cell interactions during ontogenetic development and in synaptic plasticity in the adult. May be indirectly involved in synapse plasticity of the hippocampus, via its role in HNK-1 biosynthesis. Sulfates terminal glucuronyl residue of the laminin globular (LG)-domain binding epitope on DAG1/alpha-dystroglycan and prevents further polymerization by LARGE1 glycosyltransferase. Likely defines the chain length of LG epitope, conferring binding specificity to extracellular matrix components. Plays a role in down-regulating the steroid hormones. Sulfates glucuronidated estrogens and androgens with an impact in hormone cycle and fertility. Has a preference for glucuronyl moiety at the 3-hydroxyl group of a sterol ring rather than the 17-hydroxyl group, showing high catalytic efficiency for 17beta-estradiol 3-O-(beta-D-glucuronate) and dehydroepiandrosterone 3-O-(beta-D-glucuronate) hormones. The protein is Carbohydrate sulfotransferase 10 (CHST10) of Pongo abelii (Sumatran orangutan).